We begin with the raw amino-acid sequence, 173 residues long: Crossover junction endodeoxyribonuclease RuvC (173 aa).

Active-site residues include D10, E71, and D143. Residues D10, E71, and D143 each contribute to the Mg(2+) site.

This sequence belongs to the RuvC family. Homodimer which binds Holliday junction (HJ) DNA. The HJ becomes 2-fold symmetrical on binding to RuvC with unstacked arms; it has a different conformation from HJ DNA in complex with RuvA. In the full resolvosome a probable DNA-RuvA(4)-RuvB(12)-RuvC(2) complex forms which resolves the HJ. Requires Mg(2+) as cofactor.

The protein localises to the cytoplasm. It carries out the reaction Endonucleolytic cleavage at a junction such as a reciprocal single-stranded crossover between two homologous DNA duplexes (Holliday junction).. In terms of biological role, the RuvA-RuvB-RuvC complex processes Holliday junction (HJ) DNA during genetic recombination and DNA repair. Endonuclease that resolves HJ intermediates. Cleaves cruciform DNA by making single-stranded nicks across the HJ at symmetrical positions within the homologous arms, yielding a 5'-phosphate and a 3'-hydroxyl group; requires a central core of homology in the junction. The consensus cleavage sequence is 5'-(A/T)TT(C/G)-3'. Cleavage occurs on the 3'-side of the TT dinucleotide at the point of strand exchange. HJ branch migration catalyzed by RuvA-RuvB allows RuvC to scan DNA until it finds its consensus sequence, where it cleaves and resolves the cruciform DNA. The chain is Crossover junction endodeoxyribonuclease RuvC from Gloeobacter violaceus (strain ATCC 29082 / PCC 7421).